The chain runs to 251 residues: 4-hydroxy-tetrahydrodipicolinate reductase (251 aa).

NAD(+) is bound by residues 8 to 13, 76 to 78, and 106 to 109; these read GAKGRM, GTT, and APNF. Histidine 136 functions as the Proton donor/acceptor in the catalytic mechanism. A (S)-2,3,4,5-tetrahydrodipicolinate-binding site is contributed by histidine 137. Catalysis depends on lysine 140, which acts as the Proton donor. A (S)-2,3,4,5-tetrahydrodipicolinate-binding site is contributed by 146–147; the sequence is GT.

Belongs to the DapB family.

The protein resides in the cytoplasm. The catalysed reaction is (S)-2,3,4,5-tetrahydrodipicolinate + NAD(+) + H2O = (2S,4S)-4-hydroxy-2,3,4,5-tetrahydrodipicolinate + NADH + H(+). It carries out the reaction (S)-2,3,4,5-tetrahydrodipicolinate + NADP(+) + H2O = (2S,4S)-4-hydroxy-2,3,4,5-tetrahydrodipicolinate + NADPH + H(+). The protein operates within amino-acid biosynthesis; L-lysine biosynthesis via DAP pathway; (S)-tetrahydrodipicolinate from L-aspartate: step 4/4. Its function is as follows. Catalyzes the conversion of 4-hydroxy-tetrahydrodipicolinate (HTPA) to tetrahydrodipicolinate. The sequence is that of 4-hydroxy-tetrahydrodipicolinate reductase from Bifidobacterium longum subsp. infantis (strain ATCC 15697 / DSM 20088 / JCM 1222 / NCTC 11817 / S12).